An 829-amino-acid chain; its full sequence is Periplasmic nitrate reductase (829 aa).

The segment at residues 1-29 (MKMTRRAFVKANAAASAAAVAGVTLPATA) is a signal peptide (tat-type signal). The region spanning 41–97 (ITWDKAPCRFCGTGCSVLVGTQNGKVVATQGDPEAPVNKGLNCIKGYFLSKIMYGKD) is the 4Fe-4S Mo/W bis-MGD-type domain. [4Fe-4S] cluster contacts are provided by C48, C51, C55, and C83. Mo-bis(molybdopterin guanine dinucleotide) contacts are provided by residues K85, Q152, N177, C181, 214–221 (WGSNMAEM), 245–249 (STYYH), 264–266 (QSD), M374, Q378, N484, 510–511 (SD), K533, D560, and 718–727 (TGRVLEHWHT). F794 contacts substrate. Mo-bis(molybdopterin guanine dinucleotide)-binding residues include N802 and K819.

It belongs to the prokaryotic molybdopterin-containing oxidoreductase family. NasA/NapA/NarB subfamily. Component of the periplasmic nitrate reductase NapAB complex composed of NapA and NapB. Requires [4Fe-4S] cluster as cofactor. Mo-bis(molybdopterin guanine dinucleotide) serves as cofactor. Predicted to be exported by the Tat system. The position of the signal peptide cleavage has not been experimentally proven.

Its subcellular location is the periplasm. The enzyme catalyses 2 Fe(II)-[cytochrome] + nitrate + 2 H(+) = 2 Fe(III)-[cytochrome] + nitrite + H2O. Catalytic subunit of the periplasmic nitrate reductase complex NapAB. Receives electrons from NapB and catalyzes the reduction of nitrate to nitrite. In Vibrio atlanticus (strain LGP32) (Vibrio splendidus (strain Mel32)), this protein is Periplasmic nitrate reductase.